The chain runs to 239 residues: Skn-1 dependent zygotic transcript 1 protein (239 aa).

In terms of biological role, may have a role in mesendoderm development during embryogenesis. The chain is Skn-1 dependent zygotic transcript 1 protein from Caenorhabditis briggsae.